Consider the following 92-residue polypeptide: Small ribosomal subunit protein uS19 (92 aa).

The protein belongs to the universal ribosomal protein uS19 family.

Functionally, protein S19 forms a complex with S13 that binds strongly to the 16S ribosomal RNA. The protein is Small ribosomal subunit protein uS19 of Neisseria meningitidis serogroup C (strain 053442).